The sequence spans 941 residues: Pre-mRNA-processing factor 6 (941 aa).

The disordered stretch occupies residues 1–79 (MNKKKKPFLG…DEDLNDTNYD (79 aa)). Residues 39-65 (DANDPVDDRHAPPGKRTVGDQMKKNQA) are compositionally biased toward basic and acidic residues. The span at 66–78 (ADDDDEDLNDTNY) shows a compositional bias: acidic residues. Position 143 is a phosphoserine (Ser-143). Residues Thr-180, Thr-266, and Thr-275 each carry the phosphothreonine modification. Residue Ser-279 is modified to Phosphoserine. 9 HAT repeats span residues 384-416 (TDIRAKKRVLRKALEHVPNSVRLWKAAVELEEP), 418-444 (DARIMLSRAVECCPTSVELWLALARLE), 445-476 (TYENARKVLNKARENIPTDRHIWITAAKLEEA), 554-586 (NALECARAIYAYALQVFPSKKSVWLRAAYFEKN), 588-620 (GTRESLEALLQRAVAHCPKAEVLWLMGAKSKWL), 622-654 (GDVPAARSILALAFQANPNSEEIWLAAVKLESE), 689-721 (DNIRAAQDLCEEALRHYEDFPKLWMMKGQIEEQ), 723-755 (EMMEKAREAYNQGLKKCPHSTPLWLLLSRLEEK), and 855-887 (RKITKAREWFHRTVKIDSDLGDAWAFFYKFELQ).

As to quaternary structure, identified in the spliceosome B complex. Identified in the spliceosome C complex. Associates with the U5 snRNP particle. Component of the U4/U6-U5 tri-snRNP complex composed of the U4, U6 and U5 snRNAs and at least PRPF3, PRPF4, PRPF6, PRPF8, PRPF31, SNRNP200, TXNL4A, SNRNP40, DDX23, CD2BP2, PPIH, SNU13, EFTUD2, SART1 and USP39, LSm proteins LSm2-8 and Sm proteins. Interacts with ARAF. Interacts with AR and NR3C1, but not ESR1, independently of the presence of hormones. Interacts with USH1G. Post-translationally, phosphorylated by PRP4K during spliceosome assembly. As to expression, widely expressed.

It is found in the nucleus. The protein resides in the nucleoplasm. Its subcellular location is the nucleus speckle. Involved in pre-mRNA splicing as component of the U4/U6-U5 tri-snRNP complex, one of the building blocks of the spliceosome. Enhances dihydrotestosterone-induced transactivation activity of AR, as well as dexamethasone-induced transactivation activity of NR3C1, but does not affect estrogen-induced transactivation. This Homo sapiens (Human) protein is Pre-mRNA-processing factor 6.